A 325-amino-acid chain; its full sequence is Beta-ketoacyl-[acyl-carrier-protein] synthase III (325 aa).

Catalysis depends on residues Cys-114 and His-252. The ACP-binding stretch occupies residues 253 to 257 (QANFR). Asn-282 is a catalytic residue.

It belongs to the thiolase-like superfamily. FabH family. As to quaternary structure, homodimer.

It is found in the cytoplasm. It carries out the reaction malonyl-[ACP] + acetyl-CoA + H(+) = 3-oxobutanoyl-[ACP] + CO2 + CoA. Its pathway is lipid metabolism; fatty acid biosynthesis. In terms of biological role, catalyzes the condensation reaction of fatty acid synthesis by the addition to an acyl acceptor of two carbons from malonyl-ACP. Catalyzes the first condensation reaction which initiates fatty acid synthesis and may therefore play a role in governing the total rate of fatty acid production. Possesses both acetoacetyl-ACP synthase and acetyl transacylase activities. Its substrate specificity determines the biosynthesis of branched-chain and/or straight-chain of fatty acids. In Novosphingobium aromaticivorans (strain ATCC 700278 / DSM 12444 / CCUG 56034 / CIP 105152 / NBRC 16084 / F199), this protein is Beta-ketoacyl-[acyl-carrier-protein] synthase III.